The sequence spans 277 residues: Xyloglucan endotransglucosylase/hydrolase protein 19 (277 aa).

Residues Met1–Ala21 form the signal peptide. The GH16 domain maps to Gly22–Tyr213. Glu99 functions as the Nucleophile in the catalytic mechanism. The active-site Proton donor is the Glu103. Glu103 serves as a coordination point for xyloglucan. The N-linked (GlcNAc...) asparagine glycan is linked to Asn107. Xyloglucan is bound by residues His116–Asn118, Asp126–Glu128, His192–Trp193, and Gly197. Cystine bridges form between Cys221–Cys230 and Cys262–Cys276. Xyloglucan is bound at residue Arg267.

It belongs to the glycosyl hydrolase 16 family. XTH group 2 subfamily. In terms of processing, contains at least one intrachain disulfide bond essential for its enzymatic activity. In terms of tissue distribution, root specific.

The protein localises to the secreted. It localises to the cell wall. It is found in the extracellular space. Its subcellular location is the apoplast. It carries out the reaction breaks a beta-(1-&gt;4) bond in the backbone of a xyloglucan and transfers the xyloglucanyl segment on to O-4 of the non-reducing terminal glucose residue of an acceptor, which can be a xyloglucan or an oligosaccharide of xyloglucan.. Possesses xyloglucan endotransglucosylase (XET) activity in vitro. Does not possess xyloglucan endohydrolysis (XEH) activity. Cleaves and religates xyloglucan polymers, an essential constituent of the primary cell wall, and thereby participates in cell wall construction of growing tissues. Involved in cell proliferation in the tissue reunion process of wounded inflorescence stems. Maybe a downstream target of NAC071 as a consequence of auxin action in wounded stems. This Arabidopsis thaliana (Mouse-ear cress) protein is Xyloglucan endotransglucosylase/hydrolase protein 19.